A 490-amino-acid polypeptide reads, in one-letter code: Protein nucleotidyltransferase YdiU (490 aa).

8 residues coordinate ATP: glycine 94, glycine 96, arginine 97, lysine 117, aspartate 129, glycine 130, arginine 180, and arginine 187. Aspartate 256 (proton acceptor) is an active-site residue. Residues asparagine 257 and aspartate 266 each coordinate Mg(2+). Aspartate 266 serves as a coordination point for ATP.

It belongs to the SELO family. Requires Mg(2+) as cofactor. The cofactor is Mn(2+).

The enzyme catalyses L-seryl-[protein] + ATP = 3-O-(5'-adenylyl)-L-seryl-[protein] + diphosphate. The catalysed reaction is L-threonyl-[protein] + ATP = 3-O-(5'-adenylyl)-L-threonyl-[protein] + diphosphate. It carries out the reaction L-tyrosyl-[protein] + ATP = O-(5'-adenylyl)-L-tyrosyl-[protein] + diphosphate. It catalyses the reaction L-histidyl-[protein] + UTP = N(tele)-(5'-uridylyl)-L-histidyl-[protein] + diphosphate. The enzyme catalyses L-seryl-[protein] + UTP = O-(5'-uridylyl)-L-seryl-[protein] + diphosphate. The catalysed reaction is L-tyrosyl-[protein] + UTP = O-(5'-uridylyl)-L-tyrosyl-[protein] + diphosphate. Functionally, nucleotidyltransferase involved in the post-translational modification of proteins. It can catalyze the addition of adenosine monophosphate (AMP) or uridine monophosphate (UMP) to a protein, resulting in modifications known as AMPylation and UMPylation. The sequence is that of Protein nucleotidyltransferase YdiU from Clostridium perfringens (strain ATCC 13124 / DSM 756 / JCM 1290 / NCIMB 6125 / NCTC 8237 / Type A).